The following is a 197-amino-acid chain: Xanthine phosphoribosyltransferase (197 aa).

Positions 20 and 27 each coordinate xanthine. Residue 128-132 (ANGQA) participates in 5-phospho-alpha-D-ribose 1-diphosphate binding. Position 156 (lysine 156) interacts with xanthine.

Belongs to the purine/pyrimidine phosphoribosyltransferase family. Xpt subfamily. Homodimer.

The protein resides in the cytoplasm. It carries out the reaction XMP + diphosphate = xanthine + 5-phospho-alpha-D-ribose 1-diphosphate. It participates in purine metabolism; XMP biosynthesis via salvage pathway; XMP from xanthine: step 1/1. Converts the preformed base xanthine, a product of nucleic acid breakdown, to xanthosine 5'-monophosphate (XMP), so it can be reused for RNA or DNA synthesis. The polypeptide is Xanthine phosphoribosyltransferase (Bacillus thuringiensis (strain Al Hakam)).